The primary structure comprises 301 residues: Acetylglutamate kinase (301 aa).

Substrate contacts are provided by residues 68 to 69, Arg90, and Asn195; that span reads GG.

The protein belongs to the acetylglutamate kinase family. ArgB subfamily.

It is found in the cytoplasm. It carries out the reaction N-acetyl-L-glutamate + ATP = N-acetyl-L-glutamyl 5-phosphate + ADP. It functions in the pathway amino-acid biosynthesis; L-arginine biosynthesis; N(2)-acetyl-L-ornithine from L-glutamate: step 2/4. In terms of biological role, catalyzes the ATP-dependent phosphorylation of N-acetyl-L-glutamate. This is Acetylglutamate kinase from Pseudomonas fluorescens (strain Pf0-1).